The following is a 256-amino-acid chain: Phosphomannomutase (256 aa).

The Nucleophile role is filled by D12. Residues D12 and D14 each coordinate Mg(2+). The active-site Proton donor/acceptor is D14. Residues R21, R123, R134, R141, S179, and D181 each coordinate alpha-D-mannose 1-phosphate. D209 contacts Mg(2+).

It belongs to the eukaryotic PMM family. Homodimer.

It localises to the cytoplasm. The catalysed reaction is alpha-D-mannose 1-phosphate = D-mannose 6-phosphate. Its pathway is nucleotide-sugar biosynthesis; GDP-alpha-D-mannose biosynthesis; alpha-D-mannose 1-phosphate from D-fructose 6-phosphate: step 2/2. Its function is as follows. Involved in the synthesis of the GDP-mannose and dolichol-phosphate-mannose required for a number of critical mannosyl transfer reactions. This chain is Phosphomannomutase (SEC53), found in Encephalitozoon cuniculi (strain GB-M1) (Microsporidian parasite).